The following is a 95-amino-acid chain: Putative pterin-4-alpha-carbinolamine dehydratase (95 aa).

Belongs to the pterin-4-alpha-carbinolamine dehydratase family.

It catalyses the reaction (4aS,6R)-4a-hydroxy-L-erythro-5,6,7,8-tetrahydrobiopterin = (6R)-L-erythro-6,7-dihydrobiopterin + H2O. This is Putative pterin-4-alpha-carbinolamine dehydratase from Prochlorococcus marinus (strain NATL2A).